The primary structure comprises 261 residues: Ribonuclease PH (261 aa).

Phosphate contacts are provided by residues Arg-87 and Gly-125–Arg-127.

It belongs to the RNase PH family. As to quaternary structure, homohexameric ring arranged as a trimer of dimers.

It carries out the reaction tRNA(n+1) + phosphate = tRNA(n) + a ribonucleoside 5'-diphosphate. Phosphorolytic 3'-5' exoribonuclease that plays an important role in tRNA 3'-end maturation. Removes nucleotide residues following the 3'-CCA terminus of tRNAs; can also add nucleotides to the ends of RNA molecules by using nucleoside diphosphates as substrates, but this may not be physiologically important. Probably plays a role in initiation of 16S rRNA degradation (leading to ribosome degradation) during starvation. This is Ribonuclease PH from Caldanaerobacter subterraneus subsp. tengcongensis (strain DSM 15242 / JCM 11007 / NBRC 100824 / MB4) (Thermoanaerobacter tengcongensis).